A 900-amino-acid chain; its full sequence is Exosome complex component 10 homolog (900 aa).

Disordered regions lie at residues 1–31 and 147–174; these read MPRT…SEDV and TSIE…TGTP. Residues 8-28 are compositionally biased toward basic and acidic residues; the sequence is VHQEAKEESAQADQPPKKSAS. In terms of domain architecture, 3'-5' exonuclease spans 273–438; that stretch reads VVDTVEKLKQ…YVYGRMTNDL (166 aa). Mg(2+) contacts are provided by aspartate 296, glutamate 298, aspartate 354, and aspartate 423. In terms of domain architecture, HRDC spans 485–565; it reads DNRQLYALRG…LKARDQPLVK (81 aa). The segment at 731–900 is disordered; sequence EQLKRKHPQA…FSNVRKEGKK (170 aa). Residues 809-826 are compositionally biased toward basic residues; the sequence is RKQKKNQFQRGFKAKNRG. The span at 878 to 887 shows a compositional bias: low complexity; the sequence is NNRNNKQFNK.

It belongs to the exosome component 10/RRP6 family. As to quaternary structure, component of the RNA exosome complex. Interacts with spn-A/Rad51; the interaction is required for the recruitment of spn-A to the DNA-damage response foci. Interacts with Su(var)3-9, a heterochromatin factor; the interaction promotes association of Rrp6 with a subset of genomic loci. Interacts with Su(var)205, a heterochromatin factor. Interacts with HDAC1, a heterochromatin factor. Requires Mg(2+) as cofactor. Salivary gland (at protein level).

Its subcellular location is the nucleus. It is found in the chromosome. The protein localises to the cytoplasm. It localises to the cell cortex. The protein resides in the cytoskeleton. Its subcellular location is the microtubule organizing center. It is found in the centrosome. The protein localises to the spindle. It localises to the midbody. Its function is as follows. Catalytic component of the RNA exosome complex which has 3'-&gt;5' exoribonuclease activity and participates in a multitude of cellular RNA processing and degradation events. Degrades a large variety of non-coding RNAs that are processed by the exosome, such as pre-rRNAs and some small nucleolar RNAs (snoRNAs). Degrades transcripts derived from different types of heterochromatic repeats, such as subtelomeric minisatellites and simple gagaa repeats. Degrades transcripts derived from transposons and transposon fragments. Degrades chromatin-associated transcripts and contributes to the compaction of heterochromatin. Required for the efficient repair of DNA double-strand breaks via homologous recombination after irradiation. Required for cell proliferation and error-free mitosis. In Drosophila melanogaster (Fruit fly), this protein is Exosome complex component 10 homolog.